A 551-amino-acid chain; its full sequence is GMP synthase [glutamine-hydrolyzing] (551 aa).

One can recognise a Glutamine amidotransferase type-1 domain in the interval 40–233 (KILIVDFGSQ…VRKIAGLTGD (194 aa)). The Nucleophile role is filled by Cys117. Active-site residues include His207 and Glu209. A GMPS ATP-PPase domain is found at 234-426 (WTMRAFREEE…LGLPEIFVGR (193 aa)). Position 261 to 267 (261 to 267 (SGGVDSA)) interacts with ATP.

As to quaternary structure, homodimer.

The enzyme catalyses XMP + L-glutamine + ATP + H2O = GMP + L-glutamate + AMP + diphosphate + 2 H(+). Its pathway is purine metabolism; GMP biosynthesis; GMP from XMP (L-Gln route): step 1/1. Its function is as follows. Catalyzes the synthesis of GMP from XMP. In Bradyrhizobium diazoefficiens (strain JCM 10833 / BCRC 13528 / IAM 13628 / NBRC 14792 / USDA 110), this protein is GMP synthase [glutamine-hydrolyzing].